The primary structure comprises 513 residues: Meiotically up-regulated gene 133 protein (513 aa).

It belongs to the UPF0300 family.

The protein localises to the golgi apparatus. It localises to the vacuole membrane. In terms of biological role, has a role in meiosis. This is Meiotically up-regulated gene 133 protein (mug133) from Schizosaccharomyces pombe (strain 972 / ATCC 24843) (Fission yeast).